Here is a 444-residue protein sequence, read N- to C-terminus: Argininosuccinate synthase (444 aa).

ATP-binding positions include 18–26 (AFSGGLDTS) and alanine 44. Tyrosine 100 contacts L-citrulline. Glycine 130 and threonine 132 together coordinate ATP. The L-aspartate site is built by threonine 132, asparagine 136, and aspartate 137. Asparagine 136 contributes to the L-citrulline binding site. Residue aspartate 137 coordinates ATP. Arginine 140 and serine 193 together coordinate L-citrulline. ATP is bound at residue aspartate 195. Residues threonine 202, glutamate 204, and glutamate 281 each contribute to the L-citrulline site.

This sequence belongs to the argininosuccinate synthase family. Type 2 subfamily. In terms of assembly, homotetramer.

The protein localises to the cytoplasm. It carries out the reaction L-citrulline + L-aspartate + ATP = 2-(N(omega)-L-arginino)succinate + AMP + diphosphate + H(+). It functions in the pathway amino-acid biosynthesis; L-arginine biosynthesis; L-arginine from L-ornithine and carbamoyl phosphate: step 2/3. The protein is Argininosuccinate synthase of Actinobacillus succinogenes (strain ATCC 55618 / DSM 22257 / CCUG 43843 / 130Z).